The primary structure comprises 562 residues: Putative transport protein YE1478 (562 aa).

A run of 6 helical transmembrane segments spans residues L8 to G28, L32 to Q52, F66 to F86, M94 to F114, I118 to A138, and N158 to A178. RCK C-terminal domains follow at residues L202–N288 and K290–F373. Helical transmembrane passes span L383–F403, F406–L426, F447–S467, M475–A495, and I541–L561.

This sequence belongs to the AAE transporter (TC 2.A.81) family. YbjL subfamily.

It localises to the cell membrane. The polypeptide is Putative transport protein YE1478 (Yersinia enterocolitica serotype O:8 / biotype 1B (strain NCTC 13174 / 8081)).